The primary structure comprises 318 residues: Acetyl-coenzyme A carboxylase carboxyl transferase subunit alpha (318 aa).

The 251-residue stretch at 43–293 (RSQTALRDLY…GDGIAAALKS (251 aa)) folds into the CoA carboxyltransferase C-terminal domain.

It belongs to the AccA family. As to quaternary structure, acetyl-CoA carboxylase is a heterohexamer composed of biotin carboxyl carrier protein (AccB), biotin carboxylase (AccC) and two subunits each of ACCase subunit alpha (AccA) and ACCase subunit beta (AccD).

The protein localises to the cytoplasm. It carries out the reaction N(6)-carboxybiotinyl-L-lysyl-[protein] + acetyl-CoA = N(6)-biotinyl-L-lysyl-[protein] + malonyl-CoA. It functions in the pathway lipid metabolism; malonyl-CoA biosynthesis; malonyl-CoA from acetyl-CoA: step 1/1. In terms of biological role, component of the acetyl coenzyme A carboxylase (ACC) complex. First, biotin carboxylase catalyzes the carboxylation of biotin on its carrier protein (BCCP) and then the CO(2) group is transferred by the carboxyltransferase to acetyl-CoA to form malonyl-CoA. This is Acetyl-coenzyme A carboxylase carboxyl transferase subunit alpha from Bartonella bacilliformis (strain ATCC 35685 / KC583 / Herrer 020/F12,63).